We begin with the raw amino-acid sequence, 410 residues long: Trans-splicing factor Raa2, chloroplastic (410 aa).

Disordered regions lie at residues 1–40 and 56–106; these read MRTRAGAFFGKQRSTSPSGSSTSASRQWLRSSPGRTQRPA and AADH…QQQV. The N-terminal 46 residues, 1–46, are a transit peptide targeting the chloroplast; that stretch reads MRTRAGAFFGKQRSTSPSGSSTSASRQWLRSSPGRTQRPAAHRVLA. Residues 14–25 show a composition bias toward low complexity; that stretch reads STSPSGSSTSAS. Over residues 26-35 the composition is skewed to polar residues; sequence RQWLRSSPGR. The segment covering 96-106 has biased composition (low complexity); that stretch reads RQAQRRQQQQV.

The protein belongs to the pseudouridine synthase TruB family. In terms of assembly, possibly associated with other factors required for trans-splicing.

It localises to the plastid. The protein resides in the chloroplast. Functionally, required for trans-splicing of exons 2 and 3 of the chloroplast encoded psaA mRNA (a group II intron). It is not known if this protein has pseudouridine activity; mutation of the potential active site residue does not cause loss of trans-splicing. The chain is Trans-splicing factor Raa2, chloroplastic (RAA2) from Chlamydomonas reinhardtii (Chlamydomonas smithii).